The chain runs to 260 residues: Neuraminyllactose-binding hemagglutinin (260 aa).

The signal sequence occupies residues 1-27 (MRANNHFKDFAWKKCLLGASVVALLVG). A lipid anchor (N-palmitoyl cysteine) is attached at cysteine 28. A lipid anchor (S-diacylglycerol cysteine) is attached at cysteine 28. Positions 134–139 (KRTIQK) are N-acetyl-neuraminyl-alpha(2,3)-lactose binding motif.

Its subcellular location is the cell outer membrane. In Helicobacter pylori (Campylobacter pylori), this protein is Neuraminyllactose-binding hemagglutinin (hpaA).